Reading from the N-terminus, the 88-residue chain is Small ribosomal subunit protein bS16c (88 aa).

Component of the chloroplast small ribosomal subunit (SSU). Mature 70S chloroplast ribosomes of higher plants consist of a small (30S) and a large (50S) subunit. The 30S small subunit contains 1 molecule of ribosomal RNA (16S rRNA) and 24 different proteins. The 50S large subunit contains 3 rRNA molecules (23S, 5S and 4.5S rRNA) and 33 different proteins.

Its subcellular location is the plastid. It localises to the chloroplast. In terms of biological role, component of the chloroplast ribosome (chloro-ribosome), a dedicated translation machinery responsible for the synthesis of chloroplast genome-encoded proteins, including proteins of the transcription and translation machinery and components of the photosynthetic apparatus. This is Small ribosomal subunit protein bS16c from Spinacia oleracea (Spinach).